Consider the following 565-residue polypeptide: Methionine--tRNA ligase (565 aa).

Residues 16-26 (PYAYGVPHLGN) carry the 'HIGH' region motif. The Zn(2+) site is built by cysteine 148, cysteine 151, cysteine 161, and cysteine 164. The short motif at 338 to 342 (KFSKS) is the 'KMSKS' region element. Lysine 341 contributes to the ATP binding site.

It belongs to the class-I aminoacyl-tRNA synthetase family. MetG type 1 subfamily. Requires Zn(2+) as cofactor.

The protein localises to the cytoplasm. It carries out the reaction tRNA(Met) + L-methionine + ATP = L-methionyl-tRNA(Met) + AMP + diphosphate. Its function is as follows. Is required not only for elongation of protein synthesis but also for the initiation of all mRNA translation through initiator tRNA(fMet) aminoacylation. The polypeptide is Methionine--tRNA ligase (Thermofilum pendens (strain DSM 2475 / Hrk 5)).